Consider the following 382-residue polypeptide: uncharacterized protein (382 aa).

12 helical membrane passes run glycine 14 to alanine 34, methionine 45 to isoleucine 65, leucine 79 to alanine 99, phenylalanine 102 to serine 122, leucine 131 to serine 151, leucine 157 to phenylalanine 177, leucine 204 to proline 224, asparagine 236 to glycine 256, leucine 265 to histidine 285, alanine 289 to tryptophan 309, alanine 325 to methionine 345, and serine 349 to leucine 369.

Belongs to the major facilitator superfamily. YcaD (TC 2.A.1.26) family.

The protein resides in the cell inner membrane. This is an uncharacterized protein from Escherichia fergusonii (strain ATCC 35469 / DSM 13698 / CCUG 18766 / IAM 14443 / JCM 21226 / LMG 7866 / NBRC 102419 / NCTC 12128 / CDC 0568-73).